The sequence spans 367 residues: tRNA-specific 2-thiouridylase MnmA (367 aa).

Residues 10–17 and M36 contribute to the ATP site; that span reads AMSGGVDS. C106 functions as the Nucleophile in the catalytic mechanism. The cysteines at positions 106 and 204 are disulfide-linked. G130 contributes to the ATP binding site. The interval 154–156 is interaction with tRNA; that stretch reads KDQ. The active-site Cysteine persulfide intermediate is the C204. The interaction with tRNA stretch occupies residues 310-311; the sequence is RY.

The protein belongs to the MnmA/TRMU family.

It is found in the cytoplasm. It catalyses the reaction S-sulfanyl-L-cysteinyl-[protein] + uridine(34) in tRNA + AH2 + ATP = 2-thiouridine(34) in tRNA + L-cysteinyl-[protein] + A + AMP + diphosphate + H(+). Catalyzes the 2-thiolation of uridine at the wobble position (U34) of tRNA, leading to the formation of s(2)U34. The protein is tRNA-specific 2-thiouridylase MnmA of Desulforamulus reducens (strain ATCC BAA-1160 / DSM 100696 / MI-1) (Desulfotomaculum reducens).